The following is a 1151-amino-acid chain: Calcium-activated potassium channel subunit alpha-1 (1151 aa).

The disordered stretch occupies residues 1–36 (MSSNIHANHLSLDASSSSSSSSSSSSSSSSSSSVHE). Over 1–59 (MSSNIHANHLSLDASSSSSSSSSSSSSSSSSSSVHEPKMDALIIPVTMEVPCDSRGQRM) the chain is Extracellular. Low complexity predominate over residues 15-33 (SSSSSSSSSSSSSSSSSSS). The chain crosses the membrane as a helical span at residues 60-80 (WWAFLASSMVTFFGGLFIILL). Residues 81-151 (WRTLKYLWTV…MISAQTLTGR (71 aa)) are Cytoplasmic-facing. Residues Cys-91, Cys-92, and Cys-94 are each lipidated (S-palmitoyl cysteine). A helical transmembrane segment spans residues 152–172 (VLVVLVFALSIGALVIYFIDS). Residues 173 to 187 (SNPIESCQNFYKDFT) lie on the Extracellular side of the membrane. The helical transmembrane segment at 188 to 208 (LQIDMAFNVFFLLYFGLRFIA) threads the bilayer. The Cytoplasmic segment spans residues 209-212 (ANDK). A helical membrane pass occupies residues 213–233 (LWFWLEVNSVVDFFTVPPVFV). Over 234-237 (SVYL) the chain is Extracellular. A helical; Voltage-sensor membrane pass occupies residues 238–258 (NRSWLGLRFLRALRLIQFSEI). The Cytoplasmic portion of the chain corresponds to 259 to 273 (LQFLNILKTSNSIKL). Residues 274–294 (VNLLSIFISTWLTAAGFIHLV) traverse the membrane as a helical segment. The Extracellular portion of the chain corresponds to 295-308 (ENSGDPWENFQNNQ). Positions 309–331 (ALTYWECVYLLMVTMSTVGYGDV) form an intramembrane region, pore-forming. Positions 325–328 (TVGY) match the Selectivity for potassium motif. Residues 332-340 (YAKTTLGRL) lie on the Extracellular side of the membrane. A helical transmembrane segment spans residues 341–361 (FMVFFILGGLAMFASYVPEII). At 362–1151 (ELIGNRKKYG…KQKYVQEERL (790 aa)) the chain is on the cytoplasmic side. Residues 380–522 (RKHIVVCGHI…WNWKEGDDAI (143 aa)) form the RCK N-terminal 1 domain. Mg(2+) is bound by residues Glu-412, Gln-435, and Glu-437. Residues 529-549 (LGFIAQSCLAQGLSTMLANLF) form a segment S7 region. Positions 586–606 (LSFPTVCELCFVKLKLLMIAI) are segment S8. Positions 650-654 (CKACH) are heme-binding motif. The interval 674–702 (EQPSTLSPKKKQRNGGMRNSPNSSPKLMR) is disordered. At Thr-678 the chain carries Phosphothreonine. Phosphoserine is present on residues Ser-680, Ser-693, and Ser-697. The tract at residues 752–772 (VLSGHVVVCIFGDVSSALIGL) is segment S9. Positions 754 to 898 (SGHVVVCIFG…MDRSSPDNSP (145 aa)) constitute an RCK N-terminal 2 domain. Thr-885 is modified (phosphothreonine). Phosphoserine is present on residues Ser-893 and Ser-897. Positions 918-940 (TELVNDTNVQFLDQDDDDDPDTE) match the Calcium bowl motif. Positions 927, 930, 933, and 935 each coordinate Ca(2+). The segment S10 stretch occupies residues 947–967 (FACGTAFAVSVLDSLMSATYF). Low complexity predominate over residues 1101 to 1126 (RASLSHSSHSSQSSSKKSSSVHSIPS). The segment at 1101 to 1151 (RASLSHSSHSSQSSSKKSSSVHSIPSTANRQNRPKSRESRDKQKYVQEERL) is disordered. Basic and acidic residues predominate over residues 1135–1151 (KSRESRDKQKYVQEERL). 2 positions are modified to phosphoserine: Ser-1136 and Ser-1139.

The protein belongs to the potassium channel family. Calcium-activated (TC 1.A.1.3) subfamily. KCa1.1/KCNMA1 sub-subfamily. Homotetramer; which constitutes the calcium-activated potassium channel. Interacts with beta subunits KCNMB1, KCNMB2, KCNMB3 and KCNMB4. Interacts with gamma subunits LRRC26, LRRC38, LRRC52 and LRRC55. Beta and gamma subunits are accessory, and modulate its activity. Interacts with RAB11B. In terms of processing, phosphorylated. Phosphorylation by kinases such as PKA and/or PKG. In smooth muscles, phosphorylation affects its activity. Palmitoylation by ZDHHC22 and ZDHHC23 within the intracellular linker between the S0 and S1 transmembrane domains regulates localization to the plasma membrane. Depalmitoylated by LYPLA1 and LYPLAL1, leading to retard exit from the trans-Golgi network.

It localises to the cell membrane. It catalyses the reaction K(+)(in) = K(+)(out). Ethanol and carbon monoxide-bound heme increase channel activation. Heme inhibits channel activation. In terms of biological role, potassium channel activated by both membrane depolarization or increase in cytosolic Ca(2+) that mediates export of K(+). It is also activated by the concentration of cytosolic Mg(2+). Its activation dampens the excitatory events that elevate the cytosolic Ca(2+) concentration and/or depolarize the cell membrane. It therefore contributes to repolarization of the membrane potential. Plays a key role in controlling excitability in a number of systems, such as regulation of the contraction of smooth muscle, the tuning of hair cells in the cochlea, regulation of transmitter release, and innate immunity. In smooth muscles, its activation by high level of Ca(2+), caused by ryanodine receptors in the sarcoplasmic reticulum, regulates the membrane potential. In cochlea cells, its number and kinetic properties partly determine the characteristic frequency of each hair cell and thereby helps to establish a tonotopic map. Kinetics of KCNMA1 channels are determined by alternative splicing, phosphorylation status and its combination with modulating beta subunits. Highly sensitive to both iberiotoxin (IbTx) and charybdotoxin (CTX). This is Calcium-activated potassium channel subunit alpha-1 (KCNMA1) from Macaca mulatta (Rhesus macaque).